The chain runs to 381 residues: PqqA peptide cyclase (381 aa).

A Radical SAM core domain is found at 12 to 228 (VGPPLWLLAE…AEYRQRLAAE (217 aa)). [4Fe-4S] cluster-binding residues include Cys-26, Cys-30, and Cys-33.

It belongs to the radical SAM superfamily. PqqE family. Interacts with PqqD. The interaction is necessary for activity of PqqE. Requires [4Fe-4S] cluster as cofactor.

The catalysed reaction is [PQQ precursor protein] + S-adenosyl-L-methionine = E-Y cross-linked-[PQQ precursor protein] + 5'-deoxyadenosine + L-methionine + H(+). It participates in cofactor biosynthesis; pyrroloquinoline quinone biosynthesis. In terms of biological role, catalyzes the cross-linking of a glutamate residue and a tyrosine residue in the PqqA protein as part of the biosynthesis of pyrroloquinoline quinone (PQQ). The polypeptide is PqqA peptide cyclase (Pseudomonas aeruginosa (strain LESB58)).